The sequence spans 228 residues: uncharacterized protein (228 aa).

This is an uncharacterized protein from Rickettsia prowazekii (strain Madrid E).